Consider the following 876-residue polypeptide: Ergothioneine biosynthesis protein 1 (876 aa).

The segment at 36–350 (IIDIRRVAVE…TYGNEYGLHL (315 aa)) is L-histidine N(alpha)-methyltransferase. Tyrosine 88 is an L-histidine binding site. Residues glycine 119, lysine 125, and aspartate 146 each coordinate S-adenosyl-L-methionine. Residues asparagine 202, tyrosine 242, and 315–317 (EQS) each bind L-histidine. The interval 378–874 (ALWATWDVVT…YAWVGARVVR (497 aa)) is hercynylcysteine S-oxide synthase. 3 residues coordinate Fe cation: histidine 413, histidine 506, and histidine 510. 2 disordered regions span residues 631–650 (GTTNSVSGHHSNRTSKQQLP) and 732–761 (TNNGVEITPPSSPSSETPAESSSPSDSNTT). Residues 744 to 758 (PSSETPAESSSPSDS) show a composition bias toward low complexity.

In the N-terminal section; belongs to the methyltransferase superfamily. EgtD family. This sequence in the C-terminal section; belongs to the EgtB family. Fe(2+) serves as cofactor.

The protein localises to the cytoplasm. Its subcellular location is the nucleus. It carries out the reaction L-histidine + 3 S-adenosyl-L-methionine = hercynine + 3 S-adenosyl-L-homocysteine + 3 H(+). The catalysed reaction is hercynine + L-cysteine + O2 = S-(hercyn-2-yl)-L-cysteine S-oxide + H2O. Its pathway is amino-acid biosynthesis; ergothioneine biosynthesis. In terms of biological role, catalyzes the SAM-dependent triple methylation of the alpha-amino group of histidine to form hercynine and subsequent conjugation with cysteine and oxygen to form hercynylcysteine sulfoxide, the first two steps in the biosynthesis pathway of ergothioneine. Ergothioneine is an unusual thio-histidine betaine amino acid that acts as an antioxidant against peroxide in conidia and contributes to conidial longevity. The polypeptide is Ergothioneine biosynthesis protein 1 (Neurospora crassa (strain ATCC 24698 / 74-OR23-1A / CBS 708.71 / DSM 1257 / FGSC 987)).